Consider the following 822-residue polypeptide: Collagen alpha chain CG42342 (822 aa).

2 disordered regions span residues 1-45 and 66-99; these read MRKH…VEAP and RLAP…KERP. The Cytoplasmic segment spans residues 1 to 104; sequence MRKHKAPPSG…SKERPRPTVR (104 aa). The segment covering 11–25 has biased composition (polar residues); it reads SPRTMAQDNSQSEPS. Low complexity predominate over residues 76-94; the sequence is INNSNNNSNISNNSSNSSS. The chain crosses the membrane as a helical; Signal-anchor for type II membrane protein span at residues 105 to 125; it reads FISLLHVASYVLCLCAFSFAL. Residues 126–822 lie on the Extracellular side of the membrane; it reads YGNVRQTRLE…EYQDNLHNNE (697 aa). The stretch at 131–162 forms a coiled coil; the sequence is QTRLEQRMQRLQQLDARIVELELRLEQQQLLH. Disordered regions lie at residues 169 to 188, 205 to 297, and 345 to 822; these read QVLA…NGSQ, VSHL…GHPG, and LKGE…HNNE. Residues 194–222 are a coiled coil; sequence VRRELHRLRRDVSHLQLTRRQQRRQAAEA. Collagen-like domains follow at residues 241-299, 350-409, 430-469, 493-526, 527-586, 621-680, and 681-740; these read QPGP…PGMD, GEPG…KGDR, GPPG…GKRG, RGPP…PGSL, GPRG…KGDK, GPPG…SGKA, and GIPG…KGEQ. Residues 242–251 are compositionally biased toward pro residues; the sequence is PGPPGPPGPP. Residues 284–293 are compositionally biased toward basic and acidic residues; the sequence is PGDKGQKGDV. A compositionally biased stretch (low complexity) spans 360–402; it reads EAGQPGAPGERGPPGEIGAQGPQGEAGQPGVAGPPGVAGAPGT. Over residues 403-412 the composition is skewed to basic and acidic residues; the sequence is KGDKGDRGDR. A compositionally biased stretch (pro residues) spans 431 to 443; the sequence is PPGPAGPPGPPGE. The span at 504-517 shows a compositional bias: basic and acidic residues; it reads KDGRDGRDGSKGEP. Low complexity predominate over residues 522 to 540; it reads EPGSLGPRGLDGLPGEPGI. Over residues 567-579 the composition is skewed to pro residues; it reads LMGPPGLPGPPGY. A compositionally biased stretch (basic and acidic residues) spans 583 to 602; that stretch reads KGDKGDRGDSYRKMRRRQDD. Residues 619–628 are compositionally biased toward pro residues; sequence PPGPPGPMGP. Over residues 638–655 the composition is skewed to basic and acidic residues; the sequence is RGLDGRKGDPGEKGHKGD. Residues 658–668 show a composition bias toward low complexity; the sequence is PMGLPGPMGMR. A coiled-coil region spans residues 790–822; it reads TSDYEQEEEEDDEQAEDNENEYDEYQDNLHNNE. Acidic residues predominate over residues 793–815; the sequence is YEQEEEEDDEQAEDNENEYDEYQ.

The protein localises to the cell membrane. In Drosophila melanogaster (Fruit fly), this protein is Collagen alpha chain CG42342.